The sequence spans 158 residues: Endoribonuclease YbeY (158 aa).

Residues His120, His124, and His130 each coordinate Zn(2+).

This sequence belongs to the endoribonuclease YbeY family. Zn(2+) serves as cofactor.

The protein localises to the cytoplasm. Single strand-specific metallo-endoribonuclease involved in late-stage 70S ribosome quality control and in maturation of the 3' terminus of the 16S rRNA. In Spiroplasma citri, this protein is Endoribonuclease YbeY.